A 509-amino-acid chain; its full sequence is Ribonuclease Y (509 aa).

A helical transmembrane segment spans residues 5 to 25 (IIILLSVFCGIFFICFIICSS). In terms of domain architecture, KH spans 199 to 259 (TTNIVKLPSD…IRREIATRTL (61 aa)). The HD domain maps to 325-418 (VLAHSIEVAK…VAIADSISAS (94 aa)).

The protein belongs to the RNase Y family.

Its subcellular location is the cell membrane. Its function is as follows. Endoribonuclease that initiates mRNA decay. This chain is Ribonuclease Y, found in Mycoplasma mycoides subsp. mycoides SC (strain CCUG 32753 / NCTC 10114 / PG1).